The following is a 686-amino-acid chain: Delta-like protein 4 (686 aa).

The signal sequence occupies residues Met1–Ala26. Residues Gly27–Ala532 lie on the Extracellular side of the membrane. Disulfide bonds link Cys51-Cys55 and Cys62-Cys75. N-linked (GlcNAc...) asparagine glycosylation is found at Asn79, Asn109, and Asn162. Residues Val174–Cys218 form the DSL domain. An intrachain disulfide couples Cys176 to Cys185. Interaction with Notch1 regions lie at residues Ser186 to Leu188 and Arg192 to Phe196. 26 disulfide bridges follow: Cys189-Cys201, Cys209-Cys218, Cys223-Cys234, Cys227-Cys240, Cys242-Cys251, Cys254-Cys265, Cys260-Cys271, Cys273-Cys282, Cys289-Cys301, Cys295-Cys311, Cys313-Cys322, Cys329-Cys340, Cys334-Cys349, Cys351-Cys360, Cys367-Cys378, Cys372-Cys389, Cys391-Cys400, Cys407-Cys418, Cys412-Cys427, Cys429-Cys438, Cys445-Cys456, Cys450-Cys465, Cys467-Cys476, Cys485-Cys496, Cys490-Cys507, and Cys509-Cys518. 8 consecutive EGF-like domains span residues Asp219–Asn252, Glu253–Asp283, Asp285–Glu323, Gly325–Glu361, Thr364–Glu401, Lys403–Glu439, His441–Glu477, and Thr481–Glu519. A glycan (N-linked (GlcNAc...) asparagine) is linked at Asn297. Residue Asn394 is glycosylated (N-linked (GlcNAc...) asparagine). A helical transmembrane segment spans residues Val533 to Val553. The Cytoplasmic segment spans residues Arg554–Val686.

Interacts with NOTCH4. Interacts (via N-terminal DSL and MNNL domains) with NOTCH1 (via EGF-like domains). In terms of tissue distribution, expressed in vascular endothelium. Expressed in retina at least during embryogenesis.

The protein resides in the cell membrane. Functionally, involved in the Notch signaling pathway as Notch ligand. Activates NOTCH1 and NOTCH4. Involved in angiogenesis; negatively regulates endothelial cell proliferation and migration and angiogenic sprouting. Essential for retinal progenitor proliferation. Required for suppressing rod fates in late retinal progenitors as well as for proper generation of other retinal cell types. During spinal cord neurogenesis, inhibits V2a interneuron fate. This chain is Delta-like protein 4 (Dll4), found in Mus musculus (Mouse).